The primary structure comprises 110 residues: Defensin-like protein 296 (110 aa).

An N-terminal signal peptide occupies residues 1 to 28 (MASKITIFFVLALVVVCTMMVCIPTATA). 6 disulfide bridges follow: C34–C52, C40–C57, C45–C59, C81–C102, C87–C107, and C95–C109.

The protein belongs to the DEFL family.

It is found in the secreted. In Arabidopsis thaliana (Mouse-ear cress), this protein is Defensin-like protein 296.